Here is a 258-residue protein sequence, read N- to C-terminus: Spindlin-2A (258 aa).

Residues 1-23 (MKTPNAQEAEGQQTRAAAGRATG) show a composition bias toward low complexity. A disordered region spans residues 1–49 (MKTPNAQEAEGQQTRAAAGRATGSANMTKKKVSQKKQRGRPSSQPRRNI). Over residues 28–39 (TKKKVSQKKQRG) the composition is skewed to basic residues. 3 tudor-like domain regions span residues 50 to 99 (VGCR…LELH), 129 to 178 (IGKA…YQLL), and 210 to 255 (IGKH…YDLV). 2 histone H3K4me3 and H3R8me2a binding regions span residues Glu-138 and 246-248 (DFH).

It belongs to the SPIN/STSY family. Interacts with C11orf84/SPINDOC.

Its subcellular location is the nucleus. In terms of biological role, may be involved in the regulation of cell cycle progression. Exhibits H3K4me3-binding activity. The chain is Spindlin-2A (SPIN2A) from Homo sapiens (Human).